A 292-amino-acid polypeptide reads, in one-letter code: Protease HtpX (292 aa).

2 consecutive transmembrane segments (helical) span residues 5-25 (VVLFLLTNFAVLILAGIVMSV) and 35-55 (GLLVMAAIFGFGGSFISLLLS). His140 serves as a coordination point for Zn(2+). Residue Glu141 is part of the active site. His144 lines the Zn(2+) pocket. The next 2 helical transmembrane spans lie at 155 to 175 (LLQGVLNTFVIVLARVVGGII) and 193 to 213 (IIVFVLEMVFGLFATMIAMWF). Glu218 contacts Zn(2+).

It belongs to the peptidase M48B family. Zn(2+) is required as a cofactor.

It is found in the cell inner membrane. In Xanthomonas campestris pv. campestris (strain 8004), this protein is Protease HtpX.